Here is a 60-residue protein sequence, read N- to C-terminus: Beta-defensin 8 (60 aa).

Residues 1 to 22 (MRIHYLLFTFLLVLLSPLAAFS) form the signal peptide. A propeptide spanning residues 23-25 (QKI) is cleaved from the precursor. Intrachain disulfides connect cysteine 31–cysteine 58, cysteine 38–cysteine 52, and cysteine 42–cysteine 59.

The protein belongs to the beta-defensin family. As to expression, most highly expressed in testis and heart.

It localises to the secreted. A synthetic peptide displays antimicrobial activities against S.aureus, P.aeruginosa, E.coli and B.cepacia. The antimicrobial activity against S.aureus, E.coli and B.cepacia is reduced in raised concentration of NaCl, but its action against P.aeruginosa is independent of NaCl concentration. The sequence is that of Beta-defensin 8 (Defb8) from Mus musculus (Mouse).